Consider the following 205-residue polypeptide: Holliday junction branch migration complex subunit RuvA (205 aa).

Residues 1-64 (MIGKLKGLID…EDQIKLFGFR (64 aa)) form a domain I region. Positions 65-143 (SDVEREWFRL…AFADVDPGVI (79 aa)) are domain II. The interval 144–154 (RLSGAIEDSRA) is flexible linker. A domain III region spans residues 154–205 (APQPIADAISALINLGYGQPQAAAAIAAASRAAGDKAETAQLIRLGLKELAK).

This sequence belongs to the RuvA family. As to quaternary structure, homotetramer. Forms an RuvA(8)-RuvB(12)-Holliday junction (HJ) complex. HJ DNA is sandwiched between 2 RuvA tetramers; dsDNA enters through RuvA and exits via RuvB. An RuvB hexamer assembles on each DNA strand where it exits the tetramer. Each RuvB hexamer is contacted by two RuvA subunits (via domain III) on 2 adjacent RuvB subunits; this complex drives branch migration. In the full resolvosome a probable DNA-RuvA(4)-RuvB(12)-RuvC(2) complex forms which resolves the HJ.

Its subcellular location is the cytoplasm. Functionally, the RuvA-RuvB-RuvC complex processes Holliday junction (HJ) DNA during genetic recombination and DNA repair, while the RuvA-RuvB complex plays an important role in the rescue of blocked DNA replication forks via replication fork reversal (RFR). RuvA specifically binds to HJ cruciform DNA, conferring on it an open structure. The RuvB hexamer acts as an ATP-dependent pump, pulling dsDNA into and through the RuvAB complex. HJ branch migration allows RuvC to scan DNA until it finds its consensus sequence, where it cleaves and resolves the cruciform DNA. The sequence is that of Holliday junction branch migration complex subunit RuvA from Bradyrhizobium sp. (strain BTAi1 / ATCC BAA-1182).